The primary structure comprises 1331 residues: Sodium-dependent transporter bedraggled (1331 aa).

The interval 1 to 62 is disordered; that stretch reads MSSKEQQAAG…QLEHEQFGLS (62 aa). The segment covering 16–25 has biased composition (polar residues); it reads NSNAYSSLPP. Over residues 28 to 43 the composition is skewed to gly residues; the sequence is TGAGCSGAALGSGTGT. Asparagine 168 is a glycosylation site (N-linked (GlcNAc...) asparagine). Disordered stretches follow at residues 221-284 and 363-473; these read EPRT…TEPV and QTNA…SASS. The span at 258 to 282 shows a compositional bias: polar residues; the sequence is KTFSCSLRPTSQIASSSGSLETSTE. The span at 369–383 shows a compositional bias: basic and acidic residues; it reads SSEEPRPRQYGRRLE. A compositionally biased stretch (polar residues) spans 413–436; it reads LQDTPTHPIMSTCSELSSARSSRM. A compositionally biased stretch (low complexity) spans 437–453; sequence PSPVSLPSDSSSSGSSS. A compositionally biased stretch (polar residues) spans 463 to 473; sequence VQTTTMCSASS. Transmembrane regions (helical) follow at residues 505–525, 531–551, and 567–587; these read LALIGCTLGVFNMCRFAVLTI, FLLQFLLLSVIFGIPLLWLQM, and ISPICAGVGIALVMQQCFLAL. N-linked (GlcNAc...) asparagine glycans are attached at residues asparagine 627 and asparagine 631. 4 helical membrane passes run 667–687, 696–716, 741–761, and 778–798; these read QLAFYLALIWAAVFLILCKGL, IIYTLPLVALAVVTAKFVYVV, TAATQETFLTWGLLGASVIAI, and AILLVLFTLIGLGLMALLALC. A glycan (N-linked (GlcNAc...) asparagine) is linked at asparagine 857. The helical transmembrane segment at 890-910 threads the bilayer; that stretch reads WVWAAVAFATFAGFGLAQLCV. Asparagine 921 carries N-linked (GlcNAc...) asparagine glycosylation. The next 4 membrane-spanning stretches (helical) occupy residues 926–946, 956–976, 998–1018, and 1044–1064; these read VLLSCVTGLLLSIPFATEMGI, LGGSWFIPIIWTAQIFGVFLI, AFLALSWNVLLPIGLITLSVV, and MGSLIQIGVLLVIPVTAIIQI. Disordered regions lie at residues 1086-1136, 1169-1238, and 1256-1275; these read PEEG…SYTT, SLDA…ASTL, and VRHRQSQGGGNLVTASTLPR. Polar residues-rich tracts occupy residues 1097–1115 and 1186–1196; these read ARQTASQSRRNALGQTTEG and ILTNPAGSSFN. Residues 1197–1209 show a composition bias toward low complexity; it reads ADPSPASSSSPES.

Belongs to the sodium:neurotransmitter symporter (SNF) (TC 2.A.22) family.

The protein resides in the membrane. Its function is as follows. Putative sodium-dependent transporter which is required for viability, early imaginal disk development and adult motor coordination. Also has a role in the fate commitment of the R3/R4 photoreceptor cells. May function in ommatidial polarity by regulating the activity of the core polarity genes, acting upstream of (or in parallel to) Vang, dsh, pk, stan, and dgo, but downstream or independently of fz. The sequence is that of Sodium-dependent transporter bedraggled from Drosophila melanogaster (Fruit fly).